The following is a 185-amino-acid chain: Threonylcarbamoyl-AMP synthase (185 aa).

Positions 1–185 constitute a YrdC-like domain; the sequence is MDNLQQVVSA…AFSDTVLRQG (185 aa).

It belongs to the SUA5 family. TsaC subfamily.

It is found in the cytoplasm. The enzyme catalyses L-threonine + hydrogencarbonate + ATP = L-threonylcarbamoyladenylate + diphosphate + H2O. Required for the formation of a threonylcarbamoyl group on adenosine at position 37 (t(6)A37) in tRNAs that read codons beginning with adenine. Catalyzes the conversion of L-threonine, HCO(3)(-)/CO(2) and ATP to give threonylcarbamoyl-AMP (TC-AMP) as the acyladenylate intermediate, with the release of diphosphate. The sequence is that of Threonylcarbamoyl-AMP synthase from Photobacterium profundum (strain SS9).